A 178-amino-acid chain; its full sequence is Ribosome maturation factor RimM (178 aa).

Residues 100–178 enclose the PRC barrel domain; sequence AADEYYWYQL…VMRVEWDADF (79 aa).

The protein belongs to the RimM family. Binds ribosomal protein uS19.

It is found in the cytoplasm. In terms of biological role, an accessory protein needed during the final step in the assembly of 30S ribosomal subunit, possibly for assembly of the head region. Essential for efficient processing of 16S rRNA. May be needed both before and after RbfA during the maturation of 16S rRNA. It has affinity for free ribosomal 30S subunits but not for 70S ribosomes. This is Ribosome maturation factor RimM from Pseudomonas putida (strain W619).